The following is a 470-amino-acid chain: ATP synthase subunit beta (470 aa).

ATP is bound at residue Gly155–Thr162.

The protein belongs to the ATPase alpha/beta chains family. F-type ATPases have 2 components, CF(1) - the catalytic core - and CF(0) - the membrane proton channel. CF(1) has five subunits: alpha(3), beta(3), gamma(1), delta(1), epsilon(1). CF(0) has three main subunits: a(1), b(2) and c(9-12). The alpha and beta chains form an alternating ring which encloses part of the gamma chain. CF(1) is attached to CF(0) by a central stalk formed by the gamma and epsilon chains, while a peripheral stalk is formed by the delta and b chains.

Its subcellular location is the cell membrane. It carries out the reaction ATP + H2O + 4 H(+)(in) = ADP + phosphate + 5 H(+)(out). Its function is as follows. Produces ATP from ADP in the presence of a proton gradient across the membrane. The catalytic sites are hosted primarily by the beta subunits. This is ATP synthase subunit beta from Staphylococcus epidermidis (strain ATCC 35984 / DSM 28319 / BCRC 17069 / CCUG 31568 / BM 3577 / RP62A).